Reading from the N-terminus, the 355-residue chain is Probable dual-specificity RNA methyltransferase RlmN 1 (355 aa).

The active-site Proton acceptor is glutamate 91. The Radical SAM core domain maps to 99 to 336 (RADRAAGCLS…THLRRSRGPD (238 aa)). A disulfide bridge connects residues cysteine 106 and cysteine 341. Residues cysteine 113, cysteine 117, and cysteine 120 each coordinate [4Fe-4S] cluster. Residues 163-164 (GE), serine 195, 218-220 (SLH), and asparagine 294 each bind S-adenosyl-L-methionine. The active-site S-methylcysteine intermediate is cysteine 341.

The protein belongs to the radical SAM superfamily. RlmN family. The cofactor is [4Fe-4S] cluster.

Its subcellular location is the cytoplasm. It carries out the reaction adenosine(2503) in 23S rRNA + 2 reduced [2Fe-2S]-[ferredoxin] + 2 S-adenosyl-L-methionine = 2-methyladenosine(2503) in 23S rRNA + 5'-deoxyadenosine + L-methionine + 2 oxidized [2Fe-2S]-[ferredoxin] + S-adenosyl-L-homocysteine. It catalyses the reaction adenosine(37) in tRNA + 2 reduced [2Fe-2S]-[ferredoxin] + 2 S-adenosyl-L-methionine = 2-methyladenosine(37) in tRNA + 5'-deoxyadenosine + L-methionine + 2 oxidized [2Fe-2S]-[ferredoxin] + S-adenosyl-L-homocysteine. In terms of biological role, specifically methylates position 2 of adenine 2503 in 23S rRNA and position 2 of adenine 37 in tRNAs. In Opitutus terrae (strain DSM 11246 / JCM 15787 / PB90-1), this protein is Probable dual-specificity RNA methyltransferase RlmN 1.